A 149-amino-acid chain; its full sequence is Transcriptional repressor NrdR (149 aa).

A zinc finger lies at 3–34; the sequence is CPFCQSDDTKVLDTRLIDDGSQVRRRRECVSC. Positions 49–139 constitute an ATP-cone domain; sequence PHLIKSDDSR…VYRQFQDIEA (91 aa).

Belongs to the NrdR family. Zn(2+) is required as a cofactor.

Functionally, negatively regulates transcription of bacterial ribonucleotide reductase nrd genes and operons by binding to NrdR-boxes. The polypeptide is Transcriptional repressor NrdR (Ruthia magnifica subsp. Calyptogena magnifica).